A 299-amino-acid polypeptide reads, in one-letter code: uncharacterized protein (299 aa).

Over residues Met-1 to Leu-10 the composition is skewed to polar residues. Disordered stretches follow at residues Met-1 to Asn-30, Lys-54 to Asn-89, and Gln-148 to Val-212. Low complexity predominate over residues Asn-56 to Asn-89. Acidic residues-rich tracts occupy residues Tyr-150–Glu-169 and Glu-177–Val-212.

This is an uncharacterized protein from Dictyostelium discoideum (Social amoeba).